The chain runs to 163 residues: Nucleotide-binding protein YajQ (163 aa).

This sequence belongs to the YajQ family.

Functionally, nucleotide-binding protein. This chain is Nucleotide-binding protein YajQ, found in Escherichia coli (strain K12 / DH10B).